The primary structure comprises 787 residues: Integrin beta-3 (787 aa).

Residues 1–25 form the signal peptide; the sequence is MRTRRPGQLWATLLALGALAGVVVG. Residues 27-717 lie on the Extracellular side of the membrane; it reads SNICTTRGVN…EEPECPKGPD (691 aa). The PSI domain maps to 29–75; the sequence is ICTTRGVNSCQQCLAVSPVCAWCSDESLPQNSPRCNLKKNLLKDKCS. Disulfide bonds link Cys-30–Cys-48, Cys-38–Cys-460, Cys-41–Cys-63, Cys-51–Cys-74, Cys-202–Cys-209, Cys-257–Cys-298, Cys-399–Cys-411, Cys-431–Cys-458, Cys-462–Cys-482, Cys-473–Cys-485, Cys-487–Cys-496, Cys-498–Cys-528, Cys-511–Cys-526, Cys-520–Cys-531, Cys-533–Cys-546, Cys-548–Cys-569, Cys-553–Cys-567, Cys-561–Cys-572, and Cys-574–Cys-583. A VWFA domain is found at 134 to 376; the sequence is DYPVDIYYLM…QLIVDAYGKI (243 aa). Mg(2+) is bound by residues Ser-146 and Ser-148. Ca(2+)-binding residues include Ser-148, Asp-151, Asp-152, and Asp-183. The tract at residues 202–209 is CX3CL1-binding; sequence CYTMKSTC. Residues 202 to 209 are involved in CX3CL1-, NRG1-, FGF1- and IGF1-binding; that stretch reads CYTMKSTC. Residues Asn-240, Asp-242, Pro-244, Glu-245, and Asp-276 each coordinate Ca(2+). Mg(2+) is bound at residue Glu-245. The interval 292-312 is CX3CL1-binding; that stretch reads LPNDGRCHIGPDNHYSASTTM. 2 N-linked (GlcNAc...) asparagine glycosylation sites follow: Asn-345 and Asn-396. 4 consecutive I-EGF domains span residues 462-497, 498-547, 548-584, and 585-624; these read CQAF…SMCE, CSEE…KYCE, CDDF…YYCN, and CTTR…DTCE. An N-linked (GlcNAc...) asparagine glycan is attached at Asn-477. Residue Asn-584 is glycosylated (N-linked (GlcNAc...) asparagine). Cystine bridges form between Cys-585/Cys-608, Cys-592/Cys-606, Cys-600/Cys-611, Cys-613/Cys-623, Cys-626/Cys-629, Cys-633/Cys-680, Cys-639/Cys-660, Cys-642/Cys-656, and Cys-688/Cys-712. Asn-679 carries N-linked (GlcNAc...) asparagine glycosylation. A helical transmembrane segment spans residues 718 to 738; it reads ILVVLLSVMGAILLIGLATLL. The Cytoplasmic portion of the chain corresponds to 739-787; it reads IWKLLITIHDRKEFAKFEEERARAKWDTANNPLYKEATSTFTNITYRGT. Position 766 is a phosphothreonine (Thr-766). Position 772 is a phosphotyrosine (Tyr-772). The short motif at 776–782 is the LIR element; sequence TSTFTNI. Thr-778 bears the Phosphothreonine mark. Tyr-784 carries the phosphotyrosine modification.

This sequence belongs to the integrin beta chain family. As to quaternary structure, heterodimer of an alpha and a beta subunit. Beta-3 (ITGB3) associates with either alpha-IIB (ITGA2B) or alpha-V (ITGAV). Interacts with FLNB and COMP. Interacts with PDIA6 following platelet stimulation. Interacts with SYK; upon activation by ITGB3 promotes platelet adhesion. Interacts with MYO10. Interacts with DAB2. Interacts with FERMT2. Integrin ITGAV:ITGB3 interacts with FBLN5 (via N-terminus). Interacts with EMP2; regulates the levels of the heterodimer ITGA5:ITGB3 integrin expression on the plasma membrane. ITGAV:ITGB3 interacts with CCN3. ITGAV:ITGB3 and ITGA2B:ITGB3 interact with SELP (via C-type lectin domain); the interaction mediates cell-cell interaction and adhesion. ITGAV:ITGB3 interacts with AGRA2. ITGAV:ITGB3 is found in a ternary complex with CX3CR1 and CX3CL1. ITGAV:ITGB3 is found in a ternary complex with NRG1 and ERBB3. ITGAV:ITGB3 is found in a ternary complex with FGF1 and FGFR1. ITGAV:ITGB3 interacts with FGF2; it is likely that FGF2 can simultaneously bind ITGAV:ITGB3 and FGF receptors. ITGAV:ITGB3 binds to IL1B. ITGAV:ITGB3 is found in a ternary complex with IGF1 and IGF1R. ITGAV:ITGB3 interacts with IGF2. ITGAV:ITGB3 interacts with FBN1. ITGAV:ITGB3 interacts with CD9, CD81 and CD151 (via second extracellular domain). Interacts (via the allosteric site (site 2)) with CXCL12 in a CXCR4-independent manner. Interacts with MXRA8/DICAM; the interaction inhibits ITGAV:ITGB3 heterodimer formation. ITGAV:ITGB3 interacts with PTN. Forms a complex with PTPRZ1 and PTN that stimulates endothelial cell migration through ITGB3 Tyr-772 phosphorylation. ITGAV:ITGB3 interacts with SLC6A4. Interacts with SLC6A4 (via C-terminus); this interaction regulates SLC6A4 trafficking. ITGA2B:ITGB3 interacts with PPIA/CYPA; the interaction is ROS and PPIase activity-dependent and is increased in the presence of thrombin. Interacts with tensin TNS3; TNS3 also interacts with PEAK1, thus acting as an adapter molecule to bridge the association of PEAK1 with ITGB3. Interacts with TM4SF19. In terms of processing, phosphorylated on tyrosine residues in response to thrombin-induced platelet aggregation. Probably involved in outside-in signaling.

Its subcellular location is the cell membrane. The protein resides in the cell projection. The protein localises to the lamellipodium membrane. It localises to the cell junction. It is found in the focal adhesion. Its subcellular location is the postsynaptic cell membrane. The protein resides in the synapse. Its function is as follows. Integrin alpha-V/beta-3 (ITGAV:ITGB3) is a receptor for cytotactin, fibronectin, laminin, matrix metalloproteinase-2, osteopontin, osteomodulin, prothrombin, thrombospondin, vitronectin and von Willebrand factor. Integrin alpha-IIB/beta-3 (ITGA2B:ITGB3) is a receptor for fibronectin, fibrinogen, plasminogen, prothrombin, thrombospondin and vitronectin. Integrins alpha-IIB/beta-3 and alpha-V/beta-3 recognize the sequence R-G-D in a wide array of ligands. Integrin alpha-IIB/beta-3 recognizes the sequence H-H-L-G-G-G-A-K-Q-A-G-D-V in fibrinogen gamma chain. Following activation integrin alpha-IIB/beta-3 brings about platelet/platelet interaction through binding of soluble fibrinogen. This step leads to rapid platelet aggregation which physically plugs ruptured endothelial surfaces. Fibrinogen binding enhances SELP expression in activated platelets. ITGAV:ITGB3 binds to fractalkine (CX3CL1) and acts as its coreceptor in CX3CR1-dependent fractalkine signaling. ITGAV:ITGB3 binds to NRG1 (via EGF domain) and this binding is essential for NRG1-ERBB signaling. ITGAV:ITGB3 binds to FGF1 and this binding is essential for FGF1 signaling. ITGAV:ITGB3 binds to FGF2 and this binding is essential for FGF2 signaling. ITGAV:ITGB3 binds to IGF1 and this binding is essential for IGF1 signaling. ITGAV:ITGB3 binds to IGF2 and this binding is essential for IGF2 signaling. ITGAV:ITGB3 binds to IL1B and this binding is essential for IL1B signaling. ITGAV:ITGB3 binds to PLA2G2A via a site (site 2) which is distinct from the classical ligand-binding site (site 1) and this induces integrin conformational changes and enhanced ligand binding to site 1. ITGAV:ITGB3 acts as a receptor for fibrillin-1 (FBN1) and mediates R-G-D-dependent cell adhesion to FBN1. In brain, plays a role in synaptic transmission and plasticity. Involved in the regulation of the serotonin neurotransmission, is required to localize to specific compartments within the synapse the serotonin receptor SLC6A4 and for an appropriate reuptake of serotonin. Controls excitatory synaptic strength by regulating GRIA2-containing AMPAR endocytosis, which affects AMPAR abundance and composition. ITGAV:ITGB3 acts as a receptor for CD40LG. ITGAV:ITGB3 acts as a receptor for IBSP and promotes cell adhesion and migration to IBSP. This is Integrin beta-3 from Rattus norvegicus (Rat).